The sequence spans 93 residues: MADITDIKTILYTEKTLGLQEQGVVVIQTSPKMTKNGLKEVLREYFGVTPLRVNSLRMDGKVKRFKGRVGVRNDFKKFYVKLPDGVSLENGEA.

It belongs to the universal ribosomal protein uL23 family. Part of the 50S ribosomal subunit. Contacts protein L29, and trigger factor when it is bound to the ribosome.

One of the early assembly proteins it binds 23S rRNA. One of the proteins that surrounds the polypeptide exit tunnel on the outside of the ribosome. Forms the main docking site for trigger factor binding to the ribosome. This chain is Large ribosomal subunit protein uL23, found in Campylobacter fetus subsp. fetus (strain 82-40).